The sequence spans 223 residues: MVKAILLDIEGTIAPLSFVKEVMFPYSKKKLREFLEKNWEKPEIKKIVQEVEKIEGRELSLEEAVQLFSRWIDEDRKITPLKELQGHIWEEGFKSGELKAPLYEDAYEKIKEWKEKGIPVYIYSSGSVKAQNLFFGHSVYGDIRNLFSGFFDTKIGSKRERSSYEKIAKEIGLPPHEILFISDNPEELKAAKEAGMKVIQSVREGVEPSGDFEKITSFRELEI.

Belongs to the HAD-like hydrolase superfamily. MasA/MtnC family. In terms of assembly, monomer. Mg(2+) is required as a cofactor.

The enzyme catalyses 5-methylsulfanyl-2,3-dioxopentyl phosphate + H2O = 1,2-dihydroxy-5-(methylsulfanyl)pent-1-en-3-one + phosphate. It functions in the pathway amino-acid biosynthesis; L-methionine biosynthesis via salvage pathway; L-methionine from S-methyl-5-thio-alpha-D-ribose 1-phosphate: step 3/6. The protein operates within amino-acid biosynthesis; L-methionine biosynthesis via salvage pathway; L-methionine from S-methyl-5-thio-alpha-D-ribose 1-phosphate: step 4/6. In terms of biological role, bifunctional enzyme that catalyzes the enolization of 2,3-diketo-5-methylthiopentyl-1-phosphate (DK-MTP-1-P) into the intermediate 2-hydroxy-3-keto-5-methylthiopentenyl-1-phosphate (HK-MTPenyl-1-P), which is then dephosphorylated to form the acireductone 1,2-dihydroxy-3-keto-5-methylthiopentene (DHK-MTPene). This chain is Enolase-phosphatase E1, found in Aquifex aeolicus (strain VF5).